A 225-amino-acid chain; its full sequence is Phosphoglycolate phosphatase (225 aa).

Asp11 (nucleophile) is an active-site residue. Asp11, Asp13, and Asp174 together coordinate Mg(2+).

The protein belongs to the HAD-like hydrolase superfamily. CbbY/CbbZ/Gph/YieH family. It depends on Mg(2+) as a cofactor.

It catalyses the reaction 2-phosphoglycolate + H2O = glycolate + phosphate. Its pathway is organic acid metabolism; glycolate biosynthesis; glycolate from 2-phosphoglycolate: step 1/1. Its function is as follows. Specifically catalyzes the dephosphorylation of 2-phosphoglycolate. Is involved in the dissimilation of the intracellular 2-phosphoglycolate formed during the DNA repair of 3'-phosphoglycolate ends, a major class of DNA lesions induced by oxidative stress. In Nitrosococcus oceani (strain ATCC 19707 / BCRC 17464 / JCM 30415 / NCIMB 11848 / C-107), this protein is Phosphoglycolate phosphatase.